Consider the following 329-residue polypeptide: Legumin type B (329 aa).

Disordered regions lie at residues 47–79 and 97–149; these read PETQ…EDGN and EEDT…GRNG. A compositionally biased stretch (basic and acidic residues) spans 99–112; that stretch reads DTAKRLRSPRDKRN. Residues 129–138 show a composition bias toward acidic residues; the sequence is QQEEEEEEEE. Positions 161–308 constitute a Cupin type-1 domain; it reads ENIAQPARAD…AFGLRQRQVT (148 aa).

This sequence belongs to the 11S seed storage protein (globulins) family. As to quaternary structure, hexamer; each subunit is composed of an acidic and a basic chain derived from a single precursor and linked by a disulfide bond.

Functionally, this protein found in the seeds of many leguminous and non-leguminous plants is the source of sulfur-containing amino acids in seed meals. This is Legumin type B (LEB6) from Vicia faba (Broad bean).